The chain runs to 1017 residues: Putative calcium-transporting ATPase 13, plasma membrane-type (1017 aa).

Met-1 is modified (N-acetylmethionine). Over Met-1–Gly-147 the chain is Cytoplasmic. Positions Leu-20–Asn-31 are interaction with calmodulin. Residues Leu-148–Ala-168 form a helical membrane-spanning segment. The Lumenal portion of the chain corresponds to Thr-169–Tyr-186. Residues Asp-187–Phe-207 form a helical membrane-spanning segment. At Arg-208–Leu-336 the chain is on the cytoplasmic side. Residues Asp-337–Leu-356 traverse the membrane as a helical segment. Residues Val-357–Met-393 lie on the Lumenal side of the membrane. Residues Val-394–Leu-411 form a helical membrane-spanning segment. At Ala-412–Ile-802 the chain is on the cytoplasmic side. Residue Asp-449 is the 4-aspartylphosphate intermediate of the active site. Residues Asp-747 and Asp-751 each coordinate Mg(2+). A helical transmembrane segment spans residues Gln-803–Phe-821. At Val-822–Leu-832 the chain is on the lumenal side. Residues Thr-833–Ala-853 form a helical membrane-spanning segment. The Cytoplasmic portion of the chain corresponds to Thr-854–Leu-873. Residues Ile-874 to Leu-896 form a helical membrane-spanning segment. The Lumenal portion of the chain corresponds to Gln-897 to Asn-905. The chain crosses the membrane as a helical span at residues Val-906–Asn-926. The Cytoplasmic portion of the chain corresponds to Glu-927 to Lys-944. Residues Asn-945–Leu-966 form a helical membrane-spanning segment. Topologically, residues Lys-967 to Asn-976 are lumenal. Residues Leu-977–Lys-998 form a helical membrane-spanning segment. Residues Ser-999 to Val-1002 lie on the Cytoplasmic side of the membrane.

This sequence belongs to the cation transport ATPase (P-type) (TC 3.A.3) family. Type IIB subfamily.

Its subcellular location is the membrane. It catalyses the reaction Ca(2+)(in) + ATP + H2O = Ca(2+)(out) + ADP + phosphate + H(+). With respect to regulation, activated by calmodulin. In terms of biological role, this magnesium-dependent enzyme catalyzes the hydrolysis of ATP coupled with the translocation of calcium from the cytosol out of the cell or into organelles. The protein is Putative calcium-transporting ATPase 13, plasma membrane-type (ACA13) of Arabidopsis thaliana (Mouse-ear cress).